We begin with the raw amino-acid sequence, 497 residues long: FAD-linked oxidoreductase fmqD (497 aa).

A signal peptide spans 1–17 (MQYIPFLISGLVPVALS). In terms of domain architecture, FAD-binding PCMH-type spans 68-243 (NDPSYVATVK…TSATYRIYDQ (176 aa)). Residues Asn-99, Asn-261, and Asn-288 are each glycosylated (N-linked (GlcNAc...) asparagine).

This sequence belongs to the oxygen-dependent FAD-linked oxidoreductase family.

It localises to the secreted. It is found in the cell wall. The protein operates within alkaloid biosynthesis. In terms of biological role, FAD-linked oxidoreductase; part of the gene cluster that mediates the biosynthesis of the antitumor fumiquinazolines that confer a dual-usage capability to defend against phagocytes in the environment and animal hosts. The simplest member is fumiquinazoline F (FQF) with a 6-6-6 tricyclic core derived from anthranilic acid (Ant), tryptophan (Trp), and alanine (Ala). The trimodular NRPS fmqA is responsible for FQF formation. Modules 1, 2 and 3 of fmqA are predicted to activate and load Ant, Trp and Ala, respectively, providing for the assembly of an Ant-Trp-Ala-S-enzyme intermediate that would undergo double cyclization for chain release and generation of the tricyclic 6-6-6 product fumiquinazoline F. The presence of an E domain predicted for module 2 of fmqA is consistent with epimerization of L-Trp to D-Trp during assembly to generate the R-stereocenter at C14 of FQF. The FAD-dependent monooxygenase fmqB and the monomodular NRPS fmqC then maturate FQF to FQA. FmqB oxidizes the 2',3'-double bond of the indole side chain of FQF, and fmqC activates L-Ala as the adenylate, installs it as the pantetheinyl thioester on its carrier protein domain, and acylates the oxidized indole for subsequent intramolecular cyclization to create the 6-5-5-imidazolindolone of FQA. The FAD-linked oxidoreductase fmqD introduces a third layer of scaffold complexity by converting FQA to the spirohemiaminal FQC, presumably by catalyzing the formation of a transient imine within the pyrazinone ring. FQC subsequently converts nonenzymatically to the known cyclic aminal FQD. The protein is FAD-linked oxidoreductase fmqD of Aspergillus fumigatus (strain ATCC MYA-4609 / CBS 101355 / FGSC A1100 / Af293) (Neosartorya fumigata).